A 121-amino-acid polypeptide reads, in one-letter code: Small ribosomal subunit protein uS12 (121 aa).

A disordered region spans residues M1–E25. Positions R9–Q18 are enriched in basic residues. D89 is subject to 3-methylthioaspartic acid.

This sequence belongs to the universal ribosomal protein uS12 family. In terms of assembly, part of the 30S ribosomal subunit. Contacts proteins S8 and S17. May interact with IF1 in the 30S initiation complex.

Its function is as follows. With S4 and S5 plays an important role in translational accuracy. In terms of biological role, interacts with and stabilizes bases of the 16S rRNA that are involved in tRNA selection in the A site and with the mRNA backbone. Located at the interface of the 30S and 50S subunits, it traverses the body of the 30S subunit contacting proteins on the other side and probably holding the rRNA structure together. The combined cluster of proteins S8, S12 and S17 appears to hold together the shoulder and platform of the 30S subunit. The chain is Small ribosomal subunit protein uS12 from Rhodopirellula baltica (strain DSM 10527 / NCIMB 13988 / SH1).